Here is a 100-residue protein sequence, read N- to C-terminus: ATP synthase subunit g 2, mitochondrial (100 aa).

Belongs to the ATPase g subunit family. In terms of assembly, F-type ATPases have 2 components, CF(1) - the catalytic core - and CF(0) - the membrane proton channel. CF(0) seems to have nine subunits: a, b, c, d, e, f, g, F6 and 8 (or A6L).

The protein localises to the mitochondrion membrane. In terms of biological role, mitochondrial membrane ATP synthase (F(1)F(0) ATP synthase or Complex V) produces ATP from ADP in the presence of a proton gradient across the membrane which is generated by electron transport complexes of the respiratory chain. F-type ATPases consist of two structural domains, F(1) - containing the extramembraneous catalytic core, and F(0) - containing the membrane proton channel, linked together by a central stalk and a peripheral stalk. During catalysis, ATP synthesis in the catalytic domain of F(1) is coupled via a rotary mechanism of the central stalk subunits to proton translocation. Part of the complex F(0) domain. Minor subunit located with subunit a in the membrane. This Homo sapiens (Human) protein is ATP synthase subunit g 2, mitochondrial.